The sequence spans 158 residues: NAD(P)H-quinone oxidoreductase subunit J, chloroplastic (158 aa).

It belongs to the complex I 30 kDa subunit family. In terms of assembly, NDH is composed of at least 16 different subunits, 5 of which are encoded in the nucleus.

It is found in the plastid. It localises to the chloroplast thylakoid membrane. It catalyses the reaction a plastoquinone + NADH + (n+1) H(+)(in) = a plastoquinol + NAD(+) + n H(+)(out). It carries out the reaction a plastoquinone + NADPH + (n+1) H(+)(in) = a plastoquinol + NADP(+) + n H(+)(out). Functionally, NDH shuttles electrons from NAD(P)H:plastoquinone, via FMN and iron-sulfur (Fe-S) centers, to quinones in the photosynthetic chain and possibly in a chloroplast respiratory chain. The immediate electron acceptor for the enzyme in this species is believed to be plastoquinone. Couples the redox reaction to proton translocation, and thus conserves the redox energy in a proton gradient. The sequence is that of NAD(P)H-quinone oxidoreductase subunit J, chloroplastic from Jasminum nudiflorum (Winter jasmine).